The primary structure comprises 271 residues: GPN-loop GTPase 3 (271 aa).

Residue 13 to 18 coordinates GTP; that stretch reads GVGKST. The Gly-Pro-Asn (GPN)-loop; involved in dimer interface signature appears at 70–72; it reads GPN. 173–176 serves as a coordination point for GTP; it reads SKMD.

The protein belongs to the GPN-loop GTPase family. As to quaternary structure, heterodimers with GPN1 or GPN2. Binds to RNA polymerase II (RNAPII).

In terms of biological role, small GTPase required for proper nuclear import of RNA polymerase II and III (RNAPII and RNAPIII). May act at an RNAP assembly step prior to nuclear import. The sequence is that of GPN-loop GTPase 3 from Yarrowia lipolytica (strain CLIB 122 / E 150) (Yeast).